The following is a 178-amino-acid chain: uncharacterized protein (178 aa).

2 helical membrane passes run 6–26 and 154–174; these read AIFGLLSVIFVIMAISQVSGL and KELVITAVLIISILGLGAMLI.

The protein localises to the cell membrane. This is an uncharacterized protein from Methanocaldococcus jannaschii (strain ATCC 43067 / DSM 2661 / JAL-1 / JCM 10045 / NBRC 100440) (Methanococcus jannaschii).